We begin with the raw amino-acid sequence, 218 residues long: Glycerol-3-phosphate acyltransferase (218 aa).

Transmembrane regions (helical) follow at residues Ile4–Ile24, Thr54–Tyr74, Pro80–Phe100, Gly107–Met127, and Trp130–Ile150.

It belongs to the PlsY family. In terms of assembly, probably interacts with PlsX.

The protein resides in the cell inner membrane. The enzyme catalyses an acyl phosphate + sn-glycerol 3-phosphate = a 1-acyl-sn-glycero-3-phosphate + phosphate. The protein operates within lipid metabolism; phospholipid metabolism. In terms of biological role, catalyzes the transfer of an acyl group from acyl-phosphate (acyl-PO(4)) to glycerol-3-phosphate (G3P) to form lysophosphatidic acid (LPA). This enzyme utilizes acyl-phosphate as fatty acyl donor, but not acyl-CoA or acyl-ACP. The sequence is that of Glycerol-3-phosphate acyltransferase from Photorhabdus laumondii subsp. laumondii (strain DSM 15139 / CIP 105565 / TT01) (Photorhabdus luminescens subsp. laumondii).